The primary structure comprises 100 residues: Aspartyl/glutamyl-tRNA(Asn/Gln) amidotransferase subunit C (100 aa).

Belongs to the GatC family. As to quaternary structure, heterotrimer of A, B and C subunits.

It catalyses the reaction L-glutamyl-tRNA(Gln) + L-glutamine + ATP + H2O = L-glutaminyl-tRNA(Gln) + L-glutamate + ADP + phosphate + H(+). It carries out the reaction L-aspartyl-tRNA(Asn) + L-glutamine + ATP + H2O = L-asparaginyl-tRNA(Asn) + L-glutamate + ADP + phosphate + 2 H(+). Its function is as follows. Allows the formation of correctly charged Asn-tRNA(Asn) or Gln-tRNA(Gln) through the transamidation of misacylated Asp-tRNA(Asn) or Glu-tRNA(Gln) in organisms which lack either or both of asparaginyl-tRNA or glutaminyl-tRNA synthetases. The reaction takes place in the presence of glutamine and ATP through an activated phospho-Asp-tRNA(Asn) or phospho-Glu-tRNA(Gln). The sequence is that of Aspartyl/glutamyl-tRNA(Asn/Gln) amidotransferase subunit C from Streptococcus agalactiae serotype III (strain NEM316).